The following is a 199-amino-acid chain: Chaperone protein TorD (199 aa).

The protein belongs to the TorD/DmsD family. TorD subfamily.

Its subcellular location is the cytoplasm. Its function is as follows. Involved in the biogenesis of TorA. Acts on TorA before the insertion of the molybdenum cofactor and, as a result, probably favors a conformation of the apoenzyme that is competent for acquiring the cofactor. The chain is Chaperone protein TorD from Escherichia coli O8 (strain IAI1).